The chain runs to 288 residues: MKIPEEEFLAPGHRGCAGCGATVGVRLALKVLGKNTVAVSSTGCLEVITTPYPETAWRIPWIHVAFENAAAVASGVERALKAKGRDDVNVVAFAGDGGTADIGLQALSGAMERGHNIIYICYDNEAYMNTGIQRSASTPYGASTTTSPHGKESFGEDRPKKNMPLIMAAHGVPYVATASISYPEDFMEKVRKAKETDGPAYIHLHQPCTTGWGFDPAKTVELGRLAVETGSWILYEIEDGDFRVTYRPVQRKPVEEYLNAQKRFRHLTEEQKARIQEYVDSVCQELRI.

Residues cysteine 16, cysteine 19, and cysteine 44 each coordinate [4Fe-4S] cluster. Polar residues predominate over residues serine 137 to proline 148. The tract at residues serine 137 to proline 159 is disordered. Positions histidine 149–proline 159 are enriched in basic and acidic residues. Cysteine 208 provides a ligand contact to [4Fe-4S] cluster.

As to quaternary structure, heterotetramer of one alpha, one beta, one delta and one gamma chain. It depends on [4Fe-4S] cluster as a cofactor.

It carries out the reaction 2 oxidized [2Fe-2S]-[ferredoxin] + pyruvate + CoA = 2 reduced [2Fe-2S]-[ferredoxin] + acetyl-CoA + CO2 + H(+). The sequence is that of Pyruvate synthase subunit PorB (porB) from Methanothermobacter thermautotrophicus (strain ATCC 29096 / DSM 1053 / JCM 10044 / NBRC 100330 / Delta H) (Methanobacterium thermoautotrophicum).